The following is a 288-amino-acid chain: Transmembrane protein 163 (288 aa).

A disordered region spans residues 1–64 (MEPALGSERR…ESGQFSDGLE (64 aa)). Over 1-87 (MEPALGSERR…HEAQNYRKKA (87 aa)) the chain is Cytoplasmic. Residue S11 is modified to Phosphoserine. A compositionally biased stretch (pro residues) spans 12 to 24 (PPGPGVPRPPPRG). The span at 25–42 (HAPSTAAPAPSPAPMSSS) shows a compositional bias: low complexity. Residues 41-71 (SSVQSDEERQPRISESGQFSDGLEDRGLLES) form a required for interaction with MCOLN1 region. Phosphoserine occurs at positions 45, 54, 56, and 60. Residues 88-108 (LWVSWLSIIVTLALAVAAFTV) traverse the membrane as a helical segment. At 109 to 115 (SVMRYSA) the chain is on the extracellular side. Residues 116–136 (SAFGFAFDAILDVLSSAIVLW) form a helical membrane-spanning segment. The Cytoplasmic portion of the chain corresponds to 137–149 (RYSNAAAVHSANR). The helical transmembrane segment at 150–170 (EYIACVILGVIFLLSSICIVV) threads the bilayer. Residues 171 to 186 (KAIHDLSTRLLPEVDD) are Extracellular-facing. A helical membrane pass occupies residues 187–207 (FLFSVSILSGILCSVLAVLKF). Residues 208–216 (MLGKVLTSR) are Cytoplasmic-facing. The helical transmembrane segment at 217–237 (ALITDGFNSLVGGVMGFSILL) threads the bilayer. Residues 238–254 (SAEVFKHNAAVWYLDGS) lie on the Extracellular side of the membrane. A helical membrane pass occupies residues 255 to 275 (IGVLIGLTIFAYGVKLLIDMV). Residues 276-288 (PRVRQTRHYEMFE) are Cytoplasmic-facing.

Belongs to the TMEM163 family. Homodimer. Interacts with MCOLN1. Interacts with SLC30A1, SLC30A2, SLC30A3 and SLC30A4. As to expression, widely expressed, with high expression in the brain, cerebellum, heart, lung and spleen. In the brain, mainly expressed in the glutaminergic neuron subpopulations.

It localises to the cytoplasmic vesicle. The protein localises to the secretory vesicle. It is found in the synaptic vesicle membrane. The protein resides in the early endosome membrane. Its subcellular location is the late endosome membrane. It localises to the lysosome membrane. The protein localises to the cell membrane. It carries out the reaction Zn(2+)(in) = Zn(2+)(out). Its function is as follows. Zinc ion transporter that mediates zinc efflux and plays a crucial role in intracellular zinc homeostasis. Binds the divalent cations Zn(2+), Ni(2+), and to a minor extent Cu(2+). Is a functional modulator of P2X purinoceptors, including P2RX1, P2RX3, P2RX4 and P2RX7. Plays a role in central nervous system development and is required for myelination, and survival and proliferation of oligodendrocytes. This chain is Transmembrane protein 163 (Tmem163), found in Mus musculus (Mouse).